The primary structure comprises 455 residues: Succinyl-CoA--L-malate CoA-transferase alpha subunit (455 aa).

Residues Met-1–Gln-58 form a disordered region. 2 stretches are compositionally biased toward polar residues: residues Leu-7–Met-28 and Pro-48–Gln-58. The Nucleophile role is filled by Asp-227.

This sequence belongs to the CoA-transferase III family. Forms a large complex composed of six heterodimers (alpha, beta).

The catalysed reaction is succinyl-CoA + (S)-malate = (S)-malyl-CoA + succinate. The enzyme catalyses (3S)-citramalate + succinyl-CoA = (3S)-citramalyl-CoA + succinate. Its function is as follows. Involved in the 3-hydroxypropionate cycle used for autotrophic carbon dioxide fixation. Catalyzes the transfer of CoA moiety from succinyl-CoA to L-malate to yield L-malyl-CoA. This is Succinyl-CoA--L-malate CoA-transferase alpha subunit (smtA) from Chloroflexus aurantiacus (strain ATCC 29366 / DSM 635 / J-10-fl).